A 921-amino-acid chain; its full sequence is GPI ethanolamine phosphate transferase 1 (921 aa).

The Cytoplasmic segment spans residues Met-1–Leu-9. Residues Ile-10–Ile-30 traverse the membrane as a helical segment. The Lumenal segment spans residues Ser-31 to Thr-457. N-linked (GlcNAc...) asparagine glycosylation is found at Asn-90, Asn-138, Asn-198, Asn-262, and Asn-286. The helical transmembrane segment at Ile-458–Phe-478 threads the bilayer. At Ile-479 to Pro-488 the chain is on the cytoplasmic side. A helical membrane pass occupies residues Ser-489–Tyr-509. Over Gln-510 to Phe-516 the chain is Lumenal. A helical membrane pass occupies residues Tyr-517–Ile-537. Topologically, residues Arg-538–Glu-552 are cytoplasmic. The helical transmembrane segment at Ser-553–His-573 threads the bilayer. At Arg-574–Trp-575 the chain is on the lumenal side. The helical transmembrane segment at Ile-576–Leu-596 threads the bilayer. At Phe-597–Asn-599 the chain is on the cytoplasmic side. Residues Leu-600 to Ile-620 form a helical membrane-spanning segment. Glu-621 is a topological domain (lumenal). Residues Asn-622–Met-642 form a helical membrane-spanning segment. Over Arg-643 to His-654 the chain is Cytoplasmic. The chain crosses the membrane as a helical span at residues Leu-655–Ile-675. Residues Ser-676–Pro-684 lie on the Lumenal side of the membrane. The chain crosses the membrane as a helical span at residues Ala-685–Leu-705. Over His-706–Ser-728 the chain is Cytoplasmic. A helical transmembrane segment spans residues Phe-729–Val-749. Topologically, residues Gln-750 to Val-777 are lumenal. A helical transmembrane segment spans residues Ala-778–Ile-798. Topologically, residues Ser-799–Gly-819 are cytoplasmic. A helical transmembrane segment spans residues Ala-820 to Met-840. Topologically, residues Asn-841–Tyr-849 are lumenal. Residues Thr-850–Leu-870 form a helical membrane-spanning segment. The Cytoplasmic segment spans residues Lys-871–Asp-878. The chain crosses the membrane as a helical span at residues Ile-879–Leu-899. The Lumenal segment spans residues Glu-900–Asn-921. Asn-909 is a glycosylation site (N-linked (GlcNAc...) asparagine).

Belongs to the PIGG/PIGN/PIGO family. PIGN subfamily.

The protein localises to the endoplasmic reticulum membrane. Its pathway is glycolipid biosynthesis; glycosylphosphatidylinositol-anchor biosynthesis. Its function is as follows. Ethanolamine phosphate transferase involved in glycosylphosphatidylinositol-anchor biosynthesis. Transfers ethanolamine phosphate to the first alpha-1,4-linked mannose of the glycosylphosphatidylinositol precursor of GPI-anchor. This Candida glabrata (strain ATCC 2001 / BCRC 20586 / JCM 3761 / NBRC 0622 / NRRL Y-65 / CBS 138) (Yeast) protein is GPI ethanolamine phosphate transferase 1 (MCD4).